Here is a 618-residue protein sequence, read N- to C-terminus: Polyamine transporter TPO5 (618 aa).

The Cytoplasmic segment spans residues 1–60; sequence MPEYTLLADNIRENIVHFDPNGLFDNLHTIVHEDDSQENEEAEHFNYDQVLDKSLLSRGS. The chain crosses the membrane as a helical span at residues 61 to 84; the sequence is IVGLGLGLMSPVLGMCTSMAIGLI. Residues 85–90 lie on the Extracellular side of the membrane; it reads NGGPLT. Residues 91–110 form a helical membrane-spanning segment; sequence IMLGFLISGVCIWFSSLSLG. The Cytoplasmic segment spans residues 111 to 131; the sequence is EIVSKFPMELHVGSAMLAPEK. The helical transmembrane segment at 132 to 148 threads the bilayer; it reads LKLVCSWYTGWLMLIGN. At 149–154 the chain is on the extracellular side; it reads WTMSTS. The helical transmembrane segment at 155 to 171 threads the bilayer; the sequence is ITFAGAQLTISLILMTN. Residues 172-179 are Cytoplasmic-facing; the sequence is SNLISEAH. Residues 180–200 traverse the membrane as a helical segment; the sequence is LIFYTVIVFYLVVTVVGLVNL. The Extracellular segment spans residues 201-211; that stretch reads KFARFIETINK. Residues 212 to 231 form a helical membrane-spanning segment; it reads VCVYWIIYAIIFIDILLLVF. Topologically, residues 232–297 are cytoplasmic; it reads HKGKFRSLKY…EKDIPRGMSN (66 aa). Residues 298–317 traverse the membrane as a helical segment; that stretch reads AVLLSAFSGVIFLIPIMLIL. Residues 318–342 are Extracellular-facing; the sequence is PDNDLLFTNHKVLPIVNIFTKSTDS. A helical transmembrane segment spans residues 343–367; that stretch reads VVLSFFLVLLILGNLLFSGIGSITT. Over 368-402 the chain is Cytoplasmic; the sequence is SSRAVYSFSRDQAIPYYDKWTYVEPDSQSKVPKNS. Residues 403–419 traverse the membrane as a helical segment; it reads VVLSMIISYFLGLLALI. Over 420–425 the chain is Extracellular; sequence STAAFN. A helical membrane pass occupies residues 426–449; it reads AFIGAAVLCLCSATFIPLVLVLFT. Residues 450-464 lie on the Cytoplasmic side of the membrane; that stretch reads RRRAIRSAPVKIRYK. Residues 465 to 486 traverse the membrane as a helical segment; it reads FGWFINIVSIVWLLLSMVSVCL. Residues 487 to 498 lie on the Extracellular side of the membrane; it reads PTQVPVTFKTMN. The chain crosses the membrane as a helical span at residues 499 to 516; that stretch reads YALMVYVFCILVITGLYF. Residues 517 to 618 lie on the Cytoplasmic side of the membrane; it reads KWGKYNFRLP…DLADDRRYDI (102 aa). Phosphoserine is present on Ser569. A disordered region spans residues 576–618; sequence VHPKSSTENPFEENEENVITDYGDEHHTAEQEFDLADDRRYDI. Basic and acidic residues predominate over residues 598–618; it reads GDEHHTAEQEFDLADDRRYDI.

This sequence belongs to the amino acid-polyamine-organocation (APC) superfamily.

The protein resides in the golgi apparatus membrane. Functionally, required for polyamine transport. Transports putrescine effectively and spermidine less effectively. The polypeptide is Polyamine transporter TPO5 (TPO5) (Saccharomyces cerevisiae (strain ATCC 204508 / S288c) (Baker's yeast)).